A 244-amino-acid chain; its full sequence is Phosphoadenosine 5'-phosphosulfate reductase (244 aa).

The Nucleophile; cysteine thiosulfonate intermediate role is filled by Cys-239.

The protein belongs to the PAPS reductase family. CysH subfamily.

The protein resides in the cytoplasm. It carries out the reaction [thioredoxin]-disulfide + sulfite + adenosine 3',5'-bisphosphate + 2 H(+) = [thioredoxin]-dithiol + 3'-phosphoadenylyl sulfate. The protein operates within sulfur metabolism; hydrogen sulfide biosynthesis; sulfite from sulfate: step 3/3. Functionally, catalyzes the formation of sulfite from phosphoadenosine 5'-phosphosulfate (PAPS) using thioredoxin as an electron donor. This Salmonella paratyphi A (strain AKU_12601) protein is Phosphoadenosine 5'-phosphosulfate reductase.